The following is a 457-amino-acid chain: Bifunctional protein GlmU (457 aa).

A pyrophosphorylase region spans residues 1-229 (MSNSAKSVVI…LSEMEGVNNR (229 aa)). Residues 11–14 (LAAG), Lys25, Gln76, 81–82 (GT), 103–105 (YGD), Gly140, Glu154, Asn169, and Asn227 contribute to the UDP-N-acetyl-alpha-D-glucosamine site. Mg(2+) is bound at residue Asp105. Residue Asn227 coordinates Mg(2+). Residues 230–250 (LQLSALERIYQSEQAEQLLLA) are linker. Residues 251-457 (GVMLLDPARF…GWKRPVKEKK (207 aa)) are N-acetyltransferase. UDP-N-acetyl-alpha-D-glucosamine contacts are provided by Arg333 and Lys351. Residue His363 is the Proton acceptor of the active site. Residues Tyr366 and Asn377 each contribute to the UDP-N-acetyl-alpha-D-glucosamine site. Acetyl-CoA-binding positions include Ala380, 386-387 (NY), Ser405, Ala423, and Arg440.

The protein in the N-terminal section; belongs to the N-acetylglucosamine-1-phosphate uridyltransferase family. It in the C-terminal section; belongs to the transferase hexapeptide repeat family. In terms of assembly, homotrimer. It depends on Mg(2+) as a cofactor.

It is found in the cytoplasm. It catalyses the reaction alpha-D-glucosamine 1-phosphate + acetyl-CoA = N-acetyl-alpha-D-glucosamine 1-phosphate + CoA + H(+). The catalysed reaction is N-acetyl-alpha-D-glucosamine 1-phosphate + UTP + H(+) = UDP-N-acetyl-alpha-D-glucosamine + diphosphate. It functions in the pathway nucleotide-sugar biosynthesis; UDP-N-acetyl-alpha-D-glucosamine biosynthesis; N-acetyl-alpha-D-glucosamine 1-phosphate from alpha-D-glucosamine 6-phosphate (route II): step 2/2. The protein operates within nucleotide-sugar biosynthesis; UDP-N-acetyl-alpha-D-glucosamine biosynthesis; UDP-N-acetyl-alpha-D-glucosamine from N-acetyl-alpha-D-glucosamine 1-phosphate: step 1/1. Its pathway is bacterial outer membrane biogenesis; LPS lipid A biosynthesis. Functionally, catalyzes the last two sequential reactions in the de novo biosynthetic pathway for UDP-N-acetylglucosamine (UDP-GlcNAc). The C-terminal domain catalyzes the transfer of acetyl group from acetyl coenzyme A to glucosamine-1-phosphate (GlcN-1-P) to produce N-acetylglucosamine-1-phosphate (GlcNAc-1-P), which is converted into UDP-GlcNAc by the transfer of uridine 5-monophosphate (from uridine 5-triphosphate), a reaction catalyzed by the N-terminal domain. The sequence is that of Bifunctional protein GlmU from Photorhabdus laumondii subsp. laumondii (strain DSM 15139 / CIP 105565 / TT01) (Photorhabdus luminescens subsp. laumondii).